The primary structure comprises 145 residues: Protein SprT-like (145 aa).

The region spanning 4 to 140 (TNYVQEVSLA…VCGNCHGKLI (137 aa)) is the SprT-like domain. His64 contacts Zn(2+). Glu65 is a catalytic residue. His68 provides a ligand contact to Zn(2+).

Belongs to the SprT family. The cofactor is Zn(2+).

Its subcellular location is the cytoplasm. The protein is Protein SprT-like of Streptococcus pyogenes serotype M18 (strain MGAS8232).